The sequence spans 421 residues: UDP-N-acetylglucosamine 1-carboxyvinyltransferase (421 aa).

22–23 (KN) is a binding site for phosphoenolpyruvate. Arginine 95 contacts UDP-N-acetyl-alpha-D-glucosamine. Cysteine 119 functions as the Proton donor in the catalytic mechanism. Cysteine 119 is subject to 2-(S-cysteinyl)pyruvic acid O-phosphothioketal. UDP-N-acetyl-alpha-D-glucosamine contacts are provided by residues 124–128 (RPVDQ), aspartate 309, and isoleucine 331.

It belongs to the EPSP synthase family. MurA subfamily.

Its subcellular location is the cytoplasm. It carries out the reaction phosphoenolpyruvate + UDP-N-acetyl-alpha-D-glucosamine = UDP-N-acetyl-3-O-(1-carboxyvinyl)-alpha-D-glucosamine + phosphate. It participates in cell wall biogenesis; peptidoglycan biosynthesis. In terms of biological role, cell wall formation. Adds enolpyruvyl to UDP-N-acetylglucosamine. This chain is UDP-N-acetylglucosamine 1-carboxyvinyltransferase, found in Leptothrix cholodnii (strain ATCC 51168 / LMG 8142 / SP-6) (Leptothrix discophora (strain SP-6)).